Consider the following 571-residue polypeptide: Wee1-like protein kinase 1-A (571 aa).

The tract at residues 1–101 is disordered; that stretch reads MSLQPVPHRL…PDCPGTPPHK (101 aa). Over residues 81–98 the composition is skewed to pro residues; the sequence is PASPPGPAASPPDCPGTP. A Protein kinase domain is found at 224–494; that stretch reads FHELEKIGSG…SMALVKHSVL (271 aa). Residues 230–238 and K253 contribute to the ATP site; that span reads IGSGEFGSV. D351 functions as the Proton acceptor in the catalytic mechanism. Residues N356 and D388 each coordinate Mg(2+). Positions 500-539 form a coiled coil; the sequence is KNAEQLRIELNAEKFKNALLQKELKKAQIAKAAAEERALF.

Belongs to the protein kinase superfamily. Ser/Thr protein kinase family. WEE1 subfamily. In terms of tissue distribution, zygotically expressed. Expressed in regions of the embryo that are devoid of mitotic cells, such as the involuting mesoderm.

It localises to the nucleus. It carries out the reaction L-tyrosyl-[protein] + ATP = O-phospho-L-tyrosyl-[protein] + ADP + H(+). Functionally, acts as a zygotic negative regulator of entry into mitosis (G2 to M transition) by protecting the nucleus from cytoplasmically activated cyclin B1-complexed cdk1 before the onset of mitosis by mediating phosphorylation of cdk1 on 'Tyr-15'. Specifically phosphorylates and inactivates cyclin B1-complexed cdk1 reaching a maximum during G2 phase and a minimum as cells enter M phase. Phosphorylation of cyclin B1-cdk1 occurs exclusively on 'Tyr-15' and phosphorylation of monomeric cdk1 does not occur. Involved in convergent extension of the paraxial mesoderm during neurulation by inhibiting the cell cycle. The protein is Wee1-like protein kinase 1-A (wee1-a) of Xenopus laevis (African clawed frog).